The primary structure comprises 150 residues: Nucleoside diphosphate kinase (150 aa).

Positions 10, 58, 86, 92, 103, and 113 each coordinate ATP. His116 acts as the Pros-phosphohistidine intermediate in catalysis.

It belongs to the NDK family. Requires Mg(2+) as cofactor.

The protein localises to the cytoplasm. The catalysed reaction is a 2'-deoxyribonucleoside 5'-diphosphate + ATP = a 2'-deoxyribonucleoside 5'-triphosphate + ADP. It carries out the reaction a ribonucleoside 5'-diphosphate + ATP = a ribonucleoside 5'-triphosphate + ADP. Functionally, major role in the synthesis of nucleoside triphosphates other than ATP. The ATP gamma phosphate is transferred to the NDP beta phosphate via a ping-pong mechanism, using a phosphorylated active-site intermediate. This Methanobrevibacter smithii (strain ATCC 35061 / DSM 861 / OCM 144 / PS) protein is Nucleoside diphosphate kinase.